The primary structure comprises 546 residues: Protein FAM124A (546 aa).

Disordered regions lie at residues 1 to 37 (MDPKAGGGGEEDDCVDSGAETGGSDYSHLSSTSSELS), 286 to 360 (FPKP…FQRS), and 488 to 546 (SSSS…EFYI). Residues 24–36 (SDYSHLSSTSSEL) show a composition bias toward low complexity. The span at 286-302 (FPKPGRVHHASEKKRHS) shows a compositional bias: basic residues. Polar residues-rich tracts occupy residues 304–324 (PLPSTAVPSHTPGSSQQSPLN) and 347–360 (ANSTPNPPWSFQRS). Residues 488–511 (SSSSATARAAPPAPSTSTLTDSSP) show a composition bias toward low complexity.

The protein belongs to the FAM124 family.

This chain is Protein FAM124A (FAM124A), found in Homo sapiens (Human).